The chain runs to 66 residues: Large ribosomal subunit protein bL35 (66 aa).

Belongs to the bacterial ribosomal protein bL35 family.

The protein is Large ribosomal subunit protein bL35 of Methylobacterium nodulans (strain LMG 21967 / CNCM I-2342 / ORS 2060).